Reading from the N-terminus, the 311-residue chain is Sensor histidine kinase YcbM (311 aa).

The chain crosses the membrane as a helical span at residues 1-21 (MTVLWVAAVIALACLNVIQFI). The Cytoplasmic segment spans residues 22–311 (MKKKRDGNLA…FTITLKRMTY (290 aa)). The 219-residue stretch at 92–310 (NMSHDLKTPL…AFTITLKRMT (219 aa)) folds into the Histidine kinase domain. Phosphohistidine; by autocatalysis is present on H95.

It is found in the cell membrane. The catalysed reaction is ATP + protein L-histidine = ADP + protein N-phospho-L-histidine.. Functionally, member of the two-component regulatory system YcbM/YcbL. Probably activates YcbL by phosphorylation. In Bacillus subtilis (strain 168), this protein is Sensor histidine kinase YcbM (ycbM).